The following is a 126-amino-acid chain: Aspartate 1-decarboxylase (126 aa).

Ser25 functions as the Schiff-base intermediate with substrate; via pyruvic acid in the catalytic mechanism. At Ser25 the chain carries Pyruvic acid (Ser). Residue Thr57 coordinates substrate. The Proton donor role is filled by Tyr58. 73–75 (GAA) contributes to the substrate binding site.

It belongs to the PanD family. In terms of assembly, heterooctamer of four alpha and four beta subunits. Requires pyruvate as cofactor. In terms of processing, is synthesized initially as an inactive proenzyme, which is activated by self-cleavage at a specific serine bond to produce a beta-subunit with a hydroxyl group at its C-terminus and an alpha-subunit with a pyruvoyl group at its N-terminus.

It localises to the cytoplasm. The catalysed reaction is L-aspartate + H(+) = beta-alanine + CO2. It participates in cofactor biosynthesis; (R)-pantothenate biosynthesis; beta-alanine from L-aspartate: step 1/1. Catalyzes the pyruvoyl-dependent decarboxylation of aspartate to produce beta-alanine. In Cellvibrio japonicus (strain Ueda107) (Pseudomonas fluorescens subsp. cellulosa), this protein is Aspartate 1-decarboxylase.